The sequence spans 130 residues: MSMQDPIADMLTRIRNGQAASKVAISMPSSKLKVAIANVLAAEGYIESVKVLEGAKPELEITLKYFQGKPVVESIQRVSRPGLRIYKRKDELPKVMGGLGVAVVSTSKGVMTDRAARQAGLGGEIICYVA.

The protein belongs to the universal ribosomal protein uS8 family. As to quaternary structure, part of the 30S ribosomal subunit. Contacts proteins S5 and S12.

Its function is as follows. One of the primary rRNA binding proteins, it binds directly to 16S rRNA central domain where it helps coordinate assembly of the platform of the 30S subunit. This chain is Small ribosomal subunit protein uS8, found in Mannheimia succiniciproducens (strain KCTC 0769BP / MBEL55E).